Consider the following 256-residue polypeptide: Phosphoribosylaminoimidazole-succinocarboxamide synthase (256 aa).

Positions 234-256 (KPQKPAAAKKKAPVSKKTVKRTR) are disordered. Residues 240–256 (AAKKKAPVSKKTVKRTR) show a composition bias toward basic residues.

This sequence belongs to the SAICAR synthetase family.

It catalyses the reaction 5-amino-1-(5-phospho-D-ribosyl)imidazole-4-carboxylate + L-aspartate + ATP = (2S)-2-[5-amino-1-(5-phospho-beta-D-ribosyl)imidazole-4-carboxamido]succinate + ADP + phosphate + 2 H(+). It participates in purine metabolism; IMP biosynthesis via de novo pathway; 5-amino-1-(5-phospho-D-ribosyl)imidazole-4-carboxamide from 5-amino-1-(5-phospho-D-ribosyl)imidazole-4-carboxylate: step 1/2. The sequence is that of Phosphoribosylaminoimidazole-succinocarboxamide synthase from Methanoregula boonei (strain DSM 21154 / JCM 14090 / 6A8).